The sequence spans 254 residues: 5-oxoprolinase subunit A (254 aa).

The protein belongs to the LamB/PxpA family. Forms a complex composed of PxpA, PxpB and PxpC.

The enzyme catalyses 5-oxo-L-proline + ATP + 2 H2O = L-glutamate + ADP + phosphate + H(+). In terms of biological role, catalyzes the cleavage of 5-oxoproline to form L-glutamate coupled to the hydrolysis of ATP to ADP and inorganic phosphate. This is 5-oxoprolinase subunit A from Acinetobacter baumannii (strain ATCC 17978 / DSM 105126 / CIP 53.77 / LMG 1025 / NCDC KC755 / 5377).